A 255-amino-acid polypeptide reads, in one-letter code: uncharacterized protein (255 aa).

An N-terminal signal peptide occupies residues 1–23 (MKRLNTLVLYISFLILIISIVAG). Residue Cys24 is the site of N-palmitoyl cysteine attachment. A lipid anchor (S-diacylglycerol cysteine) is attached at Cys24.

The protein belongs to the staphylococcal tandem lipoprotein family.

It is found in the cell membrane. This is an uncharacterized protein from Staphylococcus aureus (strain N315).